The sequence spans 563 residues: Grainyhead-like protein 1 homolog (563 aa).

One can recognise a Grh/CP2 DB domain in the interval 194 to 428 (NNLGFQYVLE…ELDKPAALFI (235 aa)). 2 interaction with DNA regions span residues 326–335 (TDFSTQKGVK) and 372–375 (RKLR). Residues 377-405 (EDKRAQKRKVQEYTAGALPGGRKKSDGEY) form a disordered region.

Belongs to the grh/CP2 family. Grainyhead subfamily.

It localises to the nucleus. Its function is as follows. Probable transcription factor. Binds a motif with the core sequence 5'-C[ACT][TG]G-3' in regulatory elements of target genes. Many putative target genes show oscillating expression levels, perhaps as a result of rhythmic variation in accumulation of grh-1. Plays a role in proper cuticle formation and/or barrier function and is required repetitively during development, for successful completion of each molt. Involved in modulating lifespan. Plays a role in defense response to bacteria. May act upstream of the p38 MAP kinase / pmk-1 pathway. May act downstream of the insulin/IGF-1 receptor signaling (IIS) pathway. The sequence is that of Grainyhead-like protein 1 homolog from Caenorhabditis elegans.